We begin with the raw amino-acid sequence, 502 residues long: N-fatty-acyl-amino acid synthase/hydrolase PM20D1 (502 aa).

The first 25 residues, 1–25, serve as a signal peptide directing secretion; that stretch reads MAQRCVCVLALVAMLLLVFPTVSRS. His125 serves as a coordination point for Zn(2+). The active site involves Asp127. Asp157 lines the Zn(2+) pocket. Glu191 (proton acceptor) is an active-site residue. Glu192 and Asp217 together coordinate Zn(2+). A glycan (N-linked (GlcNAc...) asparagine) is linked at Asn252. His464 provides a ligand contact to Zn(2+).

This sequence belongs to the peptidase M20A family. Requires Zn(2+) as cofactor.

The protein localises to the secreted. It catalyses the reaction an N-acyl-L-amino acid + H2O = an L-alpha-amino acid + a carboxylate. The catalysed reaction is an N-acyl-aromatic L-alpha-amino acid + H2O = an aromatic L-alpha-amino acid + a carboxylate. It carries out the reaction L-phenylalanine + (9Z)-octadecenoate = N-(9Z-octadecenoyl)-L-phenylalanine + H2O. The enzyme catalyses N-(9Z-octadecenoyl)-L-leucine + H2O = L-leucine + (9Z)-octadecenoate. It catalyses the reaction N-(5Z,8Z,11Z,14Z)-eicosatetraenoyl-glycine + H2O = (5Z,8Z,11Z,14Z)-eicosatetraenoate + glycine. The catalysed reaction is N-hexadecanoyl-L-phenylalanine + H2O = hexadecanoate + L-phenylalanine. It carries out the reaction N-octadecanoyl-L-phenylalanine + H2O = octadecanoate + L-phenylalanine. The enzyme catalyses N-(4Z,7Z,10Z,13Z,16Z,19Z-docosahexaenoyl)-L-phenylalanine + H2O = (4Z,7Z,10Z,13Z,16Z,19Z)-docosahexaenoate + L-phenylalanine. It catalyses the reaction N-(9Z-octadecenoyl)-L-asparagine + H2O = L-asparagine + (9Z)-octadecenoate. The catalysed reaction is (9Z)-octadecenoate + glycine = N-(9Z-octadecenoyl)glycine + H2O. It carries out the reaction N-(9Z-octadecenoyl)-L-lysine + H2O = L-lysine + (9Z)-octadecenoate. The enzyme catalyses N-(9Z-octadecenoyl)-L-methionine + H2O = (9Z)-octadecenoate + L-methionine. It catalyses the reaction N-(9Z-octadecenoyl)-L-serine + H2O = L-serine + (9Z)-octadecenoate. The catalysed reaction is N-(9Z-octadecenoyl)-L-tryptophan + H2O = L-tryptophan + (9Z)-octadecenoate. It carries out the reaction N-(9Z-octadecenoyl)-L-tyrosine + H2O = L-tyrosine + (9Z)-octadecenoate. The enzyme catalyses N-(9Z-octadecenoyl)-L-glutamine + H2O = L-glutamine + (9Z)-octadecenoate. It catalyses the reaction N-(5Z,8Z,11Z,14Z-eicosatetraenoyl)-L-serine + H2O = (5Z,8Z,11Z,14Z)-eicosatetraenoate + L-serine. The catalysed reaction is (5Z,8Z,11Z,14Z)-eicosatetraenoate + L-phenylalanine = N-(5Z,8Z,11Z,14Z-eicosatetraenoyl)-L-phenylalanine + H2O. Its pathway is amino-acid metabolism. It participates in energy metabolism. The protein operates within lipid metabolism; fatty acid metabolism. Lipoproteins are powerful coactivators of PM20D1 activity in vitro and NAA biosynthesis in vivo. In terms of biological role, secreted enzyme that regulates the endogenous N-fatty acyl amino acid (NAAs) tissue and circulating levels by functioning as a bidirectional NAA synthase/hydrolase. It condenses free fatty acids and free amino acids to generate NAAs and bidirectionally catalyzes the reverse hydrolysis reaction. Some of these NAAs stimulate oxidative metabolism via mitochondrial uncoupling, increasing energy expenditure in a UPC1-independent manner. Thereby, this secreted protein may indirectly regulate whole body energy expenditure. PM20D1 circulates in tight association with both low- and high-density (LDL and HDL,respectively) lipoprotein particles. In Homo sapiens (Human), this protein is N-fatty-acyl-amino acid synthase/hydrolase PM20D1.